A 155-amino-acid chain; its full sequence is 6,7-dimethyl-8-ribityllumazine synthase (155 aa).

Residues Phe-23, 57–59 (AFE), and 81–83 (AVI) each bind 5-amino-6-(D-ribitylamino)uracil. 86 to 87 (AT) contacts (2S)-2-hydroxy-3-oxobutyl phosphate. The Proton donor role is filled by His-89. Phe-114 is a 5-amino-6-(D-ribitylamino)uracil binding site. Residue Arg-128 participates in (2S)-2-hydroxy-3-oxobutyl phosphate binding.

It belongs to the DMRL synthase family.

It carries out the reaction (2S)-2-hydroxy-3-oxobutyl phosphate + 5-amino-6-(D-ribitylamino)uracil = 6,7-dimethyl-8-(1-D-ribityl)lumazine + phosphate + 2 H2O + H(+). It participates in cofactor biosynthesis; riboflavin biosynthesis; riboflavin from 2-hydroxy-3-oxobutyl phosphate and 5-amino-6-(D-ribitylamino)uracil: step 1/2. Functionally, catalyzes the formation of 6,7-dimethyl-8-ribityllumazine by condensation of 5-amino-6-(D-ribitylamino)uracil with 3,4-dihydroxy-2-butanone 4-phosphate. This is the penultimate step in the biosynthesis of riboflavin. In Geotalea daltonii (strain DSM 22248 / JCM 15807 / FRC-32) (Geobacter daltonii), this protein is 6,7-dimethyl-8-ribityllumazine synthase.